The chain runs to 440 residues: MGEKPTIAISHLGCEKNRIDTEHMLGLLVKAGYGVDTNEELADYVIVNTCSFIESAREESVKTLVELAEANKKIVITGCMAQHFQTQLLEELPEAVAVVGTGDYHKIVNVIERAEQGERVTLVSAKPTYIADETTPRYRTTTEGVAYLRVAEGCDYRCAFCIIPHLRGNQRSRTIESIVAEAEQLVAQGVQEIILISQITTNYGLDIYGKPKLAELLRALGKINVPWIRMHYAYPTGLTPDVIAAIQETPNVLPYLDLPLQHSHSEVLRSMNRPWQGRVNDEIIERLKIAIPGAVLRTTFIVGFPGETEAQFEHLLQFVQRHEFDHVGVFTFSAEEGTPAYKLSNQLPQEVMDERRDRLMALQQPISWRKNQQEVGKTVEVLIEQENPESGKLIGRSGRFSPEVDGQVYVDGEAKLGTIIPVKIHSADEYDLFGQVVSHN.

In terms of domain architecture, MTTase N-terminal spans 5 to 116 (PTIAISHLGC…IVNVIERAEQ (112 aa)). [4Fe-4S] cluster-binding residues include Cys-14, Cys-50, Cys-79, Cys-154, Cys-158, and Cys-161. The 231-residue stretch at 140–370 (TTTEGVAYLR…ALQQPISWRK (231 aa)) folds into the Radical SAM core domain. One can recognise a TRAM domain in the interval 372-438 (QQEVGKTVEV…EYDLFGQVVS (67 aa)).

This sequence belongs to the methylthiotransferase family. RimO subfamily. The cofactor is [4Fe-4S] cluster.

The protein localises to the cytoplasm. The enzyme catalyses L-aspartate(89)-[ribosomal protein uS12]-hydrogen + (sulfur carrier)-SH + AH2 + 2 S-adenosyl-L-methionine = 3-methylsulfanyl-L-aspartate(89)-[ribosomal protein uS12]-hydrogen + (sulfur carrier)-H + 5'-deoxyadenosine + L-methionine + A + S-adenosyl-L-homocysteine + 2 H(+). Its function is as follows. Catalyzes the methylthiolation of an aspartic acid residue of ribosomal protein uS12. In Trichormus variabilis (strain ATCC 29413 / PCC 7937) (Anabaena variabilis), this protein is Ribosomal protein uS12 methylthiotransferase RimO.